Reading from the N-terminus, the 2559-residue chain is Ubiquitin carboxyl-terminal hydrolase 9X (2559 aa).

Residues 1 to 44 show a composition bias toward polar residues; sequence MTATTRGSPVGGNDNQGQAPDGQSQPPLQQNQTSSPDSSNENSP. Residues 1-64 are disordered; the sequence is MTATTRGSPV…DAPPQIEDEE (64 aa). 3 positions are modified to phosphoserine: Ser374, Ser375, and Ser588. The disordered stretch occupies residues 967–999; that stretch reads QISSNMPSSPDSSSDSSTGSPGNHGNHYSDGPN. Residues 969-989 show a composition bias toward low complexity; that stretch reads SSNMPSSPDSSSDSSTGSPGN. Residues 1557–1956 enclose the USP domain; the sequence is VGLKNAGATC…NAYILFYERM (400 aa). Cys1566 functions as the Nucleophile in the catalytic mechanism. The interval 1592–1633 is disordered; that stretch reads GSDVDDDMSGDEKQDNESNVDPRDDVFGYPQQFEDKPPLSKT. Ser1600 bears the Phosphoserine mark. 2 stretches are compositionally biased toward basic and acidic residues: residues 1601–1617 and 1624–1633; these read GDEK…RDDV and FEDKPPLSKT. Positions 1727, 1729, 1771, and 1774 each coordinate Zn(2+). The active-site Proton acceptor is the His1879. Phosphoserine is present on Ser2443. The segment covering 2475 to 2484 has biased composition (acidic residues); sequence PEEEPDDQDA. A disordered region spans residues 2475–2559; that stretch reads PEEEPDDQDA…QTKGSVKCTY (85 aa). 2 stretches are compositionally biased toward polar residues: residues 2503 to 2513 and 2527 to 2537; these read PGSQYQQNNHV and NNPQRTGQRAQ. The residue at position 2540 (Tyr2540) is a Phosphotyrosine. At Ser2547 the chain carries Phosphoserine. Thr2551 bears the Phosphothreonine mark.

The protein belongs to the peptidase C19 family. Interacts with SMAD4, MARK4, NUAK1 and BIRC5/survivin. Interacts with DCX. Interacts with OTUD4 and USP7; the interaction is direct. In terms of tissue distribution, highest levels in liver and brain with expression also detected in heart, muscle, spleen and kidney (at protein leve). Ubiquitously expressed in adult tissues.

It localises to the cytoplasm. Its subcellular location is the cytosol. The protein resides in the cell projection. It is found in the growth cone. The protein localises to the cytoskeleton. It localises to the cilium axoneme. The catalysed reaction is Thiol-dependent hydrolysis of ester, thioester, amide, peptide and isopeptide bonds formed by the C-terminal Gly of ubiquitin (a 76-residue protein attached to proteins as an intracellular targeting signal).. In terms of biological role, deubiquitinase involved both in the processing of ubiquitin precursors and of ubiquitinated proteins. May therefore play an important regulatory role at the level of protein turnover by preventing degradation of proteins through the removal of conjugated ubiquitin. Specifically hydrolyzes 'Lys-11'-, followed by 'Lys-63'-, 'Lys-48'- and 'Lys-6'-linked polyubiquitins chains. Essential component of TGF-beta/BMP signaling cascade. Specifically deubiquitinates monoubiquitinated SMAD4, opposing the activity of E3 ubiquitin-protein ligase TRIM33. Deubiquitinates alkylation repair enzyme ALKBH3. OTUD4 recruits USP7 and USP9X to stabilize ALKBH3, thereby promoting the repair of alkylated DNA lesions. Deubiquitinates RNA demethylase enzyme ALKBH5, promoting its stability. Deubiquitinates mTORC2 complex component RICTOR at 'Lys-294' by removing 'Lys-63'-linked polyubiquitin chains, stabilizing RICTOR and enhancing its binding to MTOR, thus promoting mTORC2 complex assembly. Regulates chromosome alignment and segregation in mitosis by regulating the localization of BIRC5/survivin to mitotic centromeres. Involved in axonal growth and neuronal cell migration. Regulates cellular clock function by enhancing the protein stability and transcriptional activity of the core circadian protein BMAL1 via its deubiquitinating activity. Acts as a regulator of peroxisome import by mediating deubiquitination of PEX5: specifically deubiquitinates PEX5 monoubiquitinated at 'Cys-11' following its retrotranslocation into the cytosol, resetting PEX5 for a subsequent import cycle. Deubiquitinates PEG10. Inhibits the activation of the Hippo signaling pathway via deubiquitination of AMOTL2 at 'Lys-337' and 'Lys-404' which prohibits its interaction with and activation of LATS2. Loss of LATS2 activation and subsequent loss of YAP1 phosphorylation results in an increase in YAP1-driven transcription of target genes. The polypeptide is Ubiquitin carboxyl-terminal hydrolase 9X (Mus musculus (Mouse)).